The chain runs to 340 residues: CMP-N-acetylneuraminate-beta-galactosamide-alpha-2,3-sialyltransferase 1 (340 aa).

Over 1–13 the chain is Cytoplasmic; that stretch reads MVTLRKRTLKVLT. A helical; Signal-anchor for type II membrane protein transmembrane segment spans residues 14-34; it reads FLVLFIFLTSFFLNYSHTMVA. At 35 to 340 the chain is on the lumenal side; the sequence is TTWFPKQMVL…INKIRIFKGR (306 aa). Disulfide bonds link cysteine 59/cysteine 64, cysteine 61/cysteine 139, and cysteine 142/cysteine 281. The N-linked (GlcNAc...) asparagine glycan is linked to asparagine 79. Glutamine 105 is a binding site for substrate. Asparagine 114 carries an N-linked (GlcNAc...) asparagine glycan. Positions 147 and 170 each coordinate substrate. An N-linked (GlcNAc...) asparagine glycan is attached at asparagine 201. 6 residues coordinate substrate: tyrosine 230, tyrosine 266, glycine 270, glycine 290, histidine 299, and histidine 316. Residue asparagine 323 is glycosylated (N-linked (GlcNAc...) asparagine).

Belongs to the glycosyltransferase 29 family. In terms of processing, the soluble form derives from the membrane form by proteolytic processing.

The protein resides in the golgi apparatus. The protein localises to the golgi stack membrane. It is found in the trans-Golgi network membrane. It localises to the secreted. It catalyses the reaction a beta-D-galactosyl-(1-&gt;3)-N-acetyl-alpha-D-galactosaminyl derivative + CMP-N-acetyl-beta-neuraminate = an N-acetyl-alpha-neuraminyl-(2-&gt;3)-beta-D-galactosyl-(1-&gt;3)-N-acetyl-alpha-D-galactosaminyl derivative + CMP + H(+). The enzyme catalyses a ganglioside GM1 + CMP-N-acetyl-beta-neuraminate = a ganglioside GD1a + CMP + H(+). It carries out the reaction a ganglioside GM1 (d18:1(4E)) + CMP-N-acetyl-beta-neuraminate = a ganglioside GD1a (d18:1(4E)) + CMP + H(+). The catalysed reaction is ganglioside GM1 (d18:1(4E)/18:0) + CMP-N-acetyl-beta-neuraminate = ganglioside GD1a (18:1(4E)/18:0) + CMP + H(+). It catalyses the reaction a ganglioside GA1 + CMP-N-acetyl-beta-neuraminate = a ganglioside GM1b + CMP + H(+). The enzyme catalyses a ganglioside GA1 (d18:1(4E)) + CMP-N-acetyl-beta-neuraminate = a ganglioside GM1b (d18:1(4E)) + CMP + H(+). It carries out the reaction a ganglioside GD1b + CMP-N-acetyl-beta-neuraminate = a ganglioside GT1b + CMP + H(+). The catalysed reaction is a 3-O-[beta-D-galactosyl-(1-&gt;3)-N-acetyl-alpha-D-galactosaminyl]-L-threonyl-[protein] + CMP-N-acetyl-beta-neuraminate = a 3-O-[N-acetyl-alpha-neuraminyl-(2-&gt;3)-beta-D-galactosyl-(1-&gt;3)-N-acetyl-alpha-D-galactosaminyl]-L-threonyl-[protein] + CMP + H(+). It catalyses the reaction a 3-O-[beta-D-galactosyl-(1-&gt;3)-N-acetyl-alpha-D-galactosaminyl]-L-seryl-[protein] + CMP-N-acetyl-beta-neuraminate = 3-O-[N-acetyl-alpha-neuraminyl-(2-&gt;3)-beta-D-galactosyl-(1-&gt;3)-N-acetyl-alpha-D-galactosaminyl]-L-seryl-[protein] + CMP + H(+). It functions in the pathway protein modification; protein glycosylation. The protein operates within glycolipid biosynthesis. Its function is as follows. A beta-galactoside alpha2-&gt;3 sialyltransferase involved in terminal sialylation of glycoproteins and glycolipids. Catalyzes the transfer of sialic acid (N-acetyl-neuraminic acid; Neu5Ac) from the nucleotide sugar donor CMP-Neu5Ac onto acceptor Galbeta-(1-&gt;3)-GalNAc-terminated glycoconjugates through an alpha2-3 linkage. Adds sialic acid to the core 1 O-glycan, Galbeta-(1-&gt;3)-GalNAc-O-Ser/Thr, which is a major structure of mucin-type O-glycans. As part of a homeostatic mechanism that regulates CD8-positive T cell numbers, sialylates core 1 O-glycans of T cell glycoproteins, SPN/CD43 and PTPRC/CD45. Prevents premature apoptosis of thymic CD8-positive T cells prior to peripheral emigration, whereas in the secondary lymphoid organs controls the survival of CD8-positive memory T cells generated following a successful immune response. Transfers sialic acid to asialofetuin, presumably onto Galbeta-(1-&gt;3)-GalNAc-O-Ser. Sialylates GM1a, GA1 and GD1b gangliosides to form GD1a, GM1b and GT1b, respectively. In Pan troglodytes (Chimpanzee), this protein is CMP-N-acetylneuraminate-beta-galactosamide-alpha-2,3-sialyltransferase 1 (ST3GAL1).